A 906-amino-acid chain; its full sequence is Protein translocase subunit SecA (906 aa).

Residues Gln-89, 107–111 (GEGKT), and Asp-502 each bind ATP. Residues Cys-885, Cys-887, Cys-896, and His-897 each contribute to the Zn(2+) site.

This sequence belongs to the SecA family. As to quaternary structure, monomer and homodimer. Part of the essential Sec protein translocation apparatus which comprises SecA, SecYEG and auxiliary proteins SecDF-YajC and YidC. Requires Zn(2+) as cofactor.

The protein localises to the cell inner membrane. The protein resides in the cytoplasm. The enzyme catalyses ATP + H2O + cellular proteinSide 1 = ADP + phosphate + cellular proteinSide 2.. Part of the Sec protein translocase complex. Interacts with the SecYEG preprotein conducting channel. Has a central role in coupling the hydrolysis of ATP to the transfer of proteins into and across the cell membrane, serving both as a receptor for the preprotein-SecB complex and as an ATP-driven molecular motor driving the stepwise translocation of polypeptide chains across the membrane. This Rhizobium rhizogenes (strain K84 / ATCC BAA-868) (Agrobacterium radiobacter) protein is Protein translocase subunit SecA.